The following is a 104-amino-acid chain: ATP-dependent Clp protease adapter protein ClpS (104 aa).

This sequence belongs to the ClpS family. As to quaternary structure, binds to the N-terminal domain of the chaperone ClpA.

In terms of biological role, involved in the modulation of the specificity of the ClpAP-mediated ATP-dependent protein degradation. This is ATP-dependent Clp protease adapter protein ClpS from Oleidesulfovibrio alaskensis (strain ATCC BAA-1058 / DSM 17464 / G20) (Desulfovibrio alaskensis).